Here is a 741-residue protein sequence, read N- to C-terminus: Pentatricopeptide repeat-containing protein At1g05670, mitochondrial (741 aa).

The transit peptide at 1-21 (MKKPFTGLLMKRGTLSSFRNF) directs the protein to the mitochondrion. PPR repeat units lie at residues 174–208 (DPRV…GLVL), 209–244 (SVDS…GVCW), 245–279 (NVAS…GYTP), 280–314 (DVIS…GLKP), 315–349 (NSYI…GILP), 350–384 (DTVV…DITP), 385–419 (DVLT…GLEP), 420–454 (DSVT…GCSP), 455–489 (NVVT…GLQP), 490–524 (NIFT…GLNA), 525–559 (DTVT…GLQP), 560–594 (TIVT…GIAP), 595–629 (NATT…GVGP), 630–664 (DGKT…GFSV), and 665–699 (SVST…GLAA).

It belongs to the PPR family. P subfamily.

Its subcellular location is the mitochondrion. The chain is Pentatricopeptide repeat-containing protein At1g05670, mitochondrial from Arabidopsis thaliana (Mouse-ear cress).